Reading from the N-terminus, the 251-residue chain is Small ribosomal subunit protein uS2 (251 aa).

Belongs to the universal ribosomal protein uS2 family.

The chain is Small ribosomal subunit protein uS2 from Deinococcus deserti (strain DSM 17065 / CIP 109153 / LMG 22923 / VCD115).